Consider the following 226-residue polypeptide: Movement and silencing protein TGBp1 (226 aa).

In terms of domain architecture, (+)RNA virus helicase ATP-binding spans 1-138; sequence MDILIISLKS…IASCGFDFET (138 aa). The (+)RNA virus helicase C-terminal domain occupies 139–226; it reads NSQEEGHLEI…KGLTYVRAGA (88 aa).

The protein belongs to the Tymovirales TGBp1 protein family. Homodimer and homooligomer. Interacts with capsid protein. Interacts with host AGO1; this interaction targets the host protein for degradation, thereby suppressing the antiviral RNA silencing.

The protein resides in the host cytoplasm. Its function is as follows. Transports viral genome to neighboring plant cells directly through plasmosdesmata, without any budding. The movement protein allows efficient cell to cell propagation, by bypassing the host cell wall barrier. Increases plasmodesma size exclusion limit. Acts as a suppressor of RNA-mediated gene silencing, also known as post-transcriptional gene silencing (PTGS), a mechanism of plant viral defense that limits the accumulation of viral RNAs. The chain is Movement and silencing protein TGBp1 from Brassica campestris (Field mustard).